Reading from the N-terminus, the 649-residue chain is MSEKVIDVQDAWRERALIDDAKYKEMYAASVSDPETFWAEHGRRIDWSTPFSKVKNTSFAPGNVSIKWFEDGKTNVALNCIDRHLETRGDQTAIIWEGDDPNESQHITYKQLHAEVCRMANVLRNRGVGKGDRVTLYLPMIPEAAYAMLACARLGAIHAIVFGGFSPDSLASRIKGCGSKLVITADEGLRGGRKVPLKANVDEAIKRLDADLVDHVIVVKRTGGNVAMEPGRDVYYHEAAEQVTDECPAEAVEAEHPLFILYTSGSTGQPKGVVHTTGGYLVYASMTHQYVFDYHDGDVYWCTADVGWVTGHSYIVYGPLANGATTLMFEGIPTYPSNSRFWEVIDKHKVNIFYTAPTAIRSLMGGGEGPVKKTSRASLRVLGSVGEPINPEAWDWYYRVVGDSRCSIVDTWWQTETGGILITPLPGATKLKPGSATRPFFGVQPVMVDAEGKELDGACEGNLCIKDSWPGQMRTVYGDHERFEQTYFSTYKNLYFTGDGARRDADGYYWITGRVDDVINVSGHRMGTAEVESSLVAHPKVSEAAVVGYPHNVKGQGIYAYVTLNEGEDGSDELRKELVTWVRKDIGPIASPDLIQFAPGLPKTRSGKIMRRILRKIAEDDFGSLGDTSTLAEPAVVDDLIENRQNRSA.

CoA is bound by residues 190 to 193 (RGGR) and threonine 310. ATP-binding positions include 386–388 (GEP), 410–415 (DTWWQT), aspartate 499, and arginine 514. Serine 522 is a binding site for CoA. ATP is bound at residue arginine 525. Mg(2+) is bound by residues valine 536, histidine 538, and valine 541. A CoA-binding site is contributed by arginine 583. Position 608 is an N6-acetyllysine (lysine 608).

The protein belongs to the ATP-dependent AMP-binding enzyme family. It depends on Mg(2+) as a cofactor. Acetylated. Deacetylation by the SIR2-homolog deacetylase activates the enzyme.

The catalysed reaction is acetate + ATP + CoA = acetyl-CoA + AMP + diphosphate. Catalyzes the conversion of acetate into acetyl-CoA (AcCoA), an essential intermediate at the junction of anabolic and catabolic pathways. AcsA undergoes a two-step reaction. In the first half reaction, AcsA combines acetate with ATP to form acetyl-adenylate (AcAMP) intermediate. In the second half reaction, it can then transfer the acetyl group from AcAMP to the sulfhydryl group of CoA, forming the product AcCoA. The protein is Acetyl-coenzyme A synthetase of Methylorubrum populi (strain ATCC BAA-705 / NCIMB 13946 / BJ001) (Methylobacterium populi).